Consider the following 326-residue polypeptide: tRNA-dihydrouridine(16) synthase (326 aa).

FMN-binding positions include 8–10 (PME) and Gln-69. Cys-99 serves as the catalytic Proton donor. Residues Lys-140, 200–202 (NGE), and 224–225 (GR) each bind FMN.

It belongs to the Dus family. DusC subfamily. FMN is required as a cofactor.

The catalysed reaction is 5,6-dihydrouridine(16) in tRNA + NADP(+) = uridine(16) in tRNA + NADPH + H(+). It catalyses the reaction 5,6-dihydrouridine(16) in tRNA + NAD(+) = uridine(16) in tRNA + NADH + H(+). Catalyzes the synthesis of 5,6-dihydrouridine (D), a modified base found in the D-loop of most tRNAs, via the reduction of the C5-C6 double bond in target uridines. Specifically modifies U16 in tRNAs. The polypeptide is tRNA-dihydrouridine(16) synthase (Ralstonia nicotianae (strain ATCC BAA-1114 / GMI1000) (Ralstonia solanacearum)).